We begin with the raw amino-acid sequence, 650 residues long: MSKTVKKFETEVQQLLDLVIHSLYSNKDIFLRELISNASDAIDKVLFESHQNAAVIEGEPEGKIKLIPDKDAGTLTIRDNGVGMTLEEVEKNIGTIAHSGTKAFLANLKEQNVADHPELIGQFGVGFYASFMVADRVTLVTRRAGHDKAAGVRWESTGDGTYTVEECAKETRGTEITLHLKEEMKEYLDEWKIRSIVRKYSDYVQYPIVMDVTRTEVPKGVNGEEIEGAGTIEKTEEETLNSMKAIWTRSKSEVTEEEYEEFYKHVSHDFEKPLKTIHYSAEGTSEFKALLYLPAHKPFDLFMPERKKGVQLYVRRVFITDSCEQLLPDYLRFVKGVVDSSDLPLNVSREILQEDVQIKRIQKSLVSKILSTLSEMREKEADSYLDFYKEFGPVLKEGVHFDYANRDKLQDLLLFESTATDAGSFVSLKEYVERMPEGQEEIYFITGTSRAALEQSPHLEIFRKKGYEVLFLTDPVDEWVVQGLPEYGGKKLKAVDRGDVIPATEEEKKEQEAKREEAAKQYGDLLSFVKEKLAERVKEVRLSNRLTDSACCLVADEHGLNANMERILRAMNQTVPESKRILELNPDHPIMQVMATLFGKDKTNPRLADYCDLLYDQALLTEGSPIADPLRFTRLVAELMVADGKAAAGE.

Residues 1–349 (MSKTVKKFET…SSDLPLNVSR (349 aa)) form an a; substrate-binding region. The b stretch occupies residues 350-566 (EILQEDVQIK…EHGLNANMER (217 aa)). The segment at 567 to 650 (ILRAMNQTVP…VADGKAAAGE (84 aa)) is c.

This sequence belongs to the heat shock protein 90 family. In terms of assembly, homodimer.

Its subcellular location is the cytoplasm. In terms of biological role, molecular chaperone. Has ATPase activity. In Geobacter sulfurreducens (strain ATCC 51573 / DSM 12127 / PCA), this protein is Chaperone protein HtpG.